The primary structure comprises 61 residues: Small ribosomal subunit protein uS14 (61 aa).

Residues Cys-24, Cys-27, Cys-40, and Cys-43 each coordinate Zn(2+).

This sequence belongs to the universal ribosomal protein uS14 family. Zinc-binding uS14 subfamily. Part of the 30S ribosomal subunit. Contacts proteins S3 and S10. It depends on Zn(2+) as a cofactor.

Its function is as follows. Binds 16S rRNA, required for the assembly of 30S particles and may also be responsible for determining the conformation of the 16S rRNA at the A site. The sequence is that of Small ribosomal subunit protein uS14 from Treponema denticola (strain ATCC 35405 / DSM 14222 / CIP 103919 / JCM 8153 / KCTC 15104).